The primary structure comprises 187 residues: MASTADFKNGLVLQIDGQLWQIVEFQHVKPGKGPAFVRTKLKNVVSGKVVDKTYNAGVKVETATVDRRDATYLYRDGSDFVFMDSEDYEQHPLPESLVGRAADFLLESMPVQIAFHDGVPLYLELPVTVELLVASTEPGLQGDRSSAGTKPATMETGAEIQVPLFINTGDKLKVDSRDGSYLGRVNA.

It belongs to the elongation factor P family.

Its subcellular location is the cytoplasm. It participates in protein biosynthesis; polypeptide chain elongation. Functionally, involved in peptide bond synthesis. Stimulates efficient translation and peptide-bond synthesis on native or reconstituted 70S ribosomes in vitro. Probably functions indirectly by altering the affinity of the ribosome for aminoacyl-tRNA, thus increasing their reactivity as acceptors for peptidyl transferase. The polypeptide is Elongation factor P (Mycobacterium sp. (strain JLS)).